A 912-amino-acid chain; its full sequence is Ubiquitin carboxyl-terminal hydrolase 3 (912 aa).

Residues 1 to 11 (MNMQDANKEES) are compositionally biased toward basic and acidic residues. Disordered stretches follow at residues 1 to 30 (MNMQ…TNMQ), 68 to 176 (IYHQ…SYSS), 241 to 384 (NSSV…TTAG), and 396 to 417 (GKSS…YVPP). Composition is skewed to low complexity over residues 82–95 (NNIN…NNNI), 102–140 (SNGI…SNNH), and 159–176 (TNSS…SYSS). Residues 249–259 (AHHHTKSHSIP) show a composition bias toward basic residues. Basic and acidic residues predominate over residues 260-310 (KHNEEVKTETHGEEEDAHDKKPHASKDAHELKKKTEVKKEDAKQDRNEKVI). Low complexity predominate over residues 335 to 355 (SKTSSPSPSPPAAKSWSAIAS). Polar residues-rich tracts occupy residues 361–384 (RQAS…TTAG) and 396–406 (GKSSSPLLSKQ). The 452-residue stretch at 460–911 (RGIINRANIC…TAYILMYQKR (452 aa)) folds into the USP domain. Cys469 serves as the catalytic Nucleophile. His861 acts as the Proton acceptor in catalysis.

Belongs to the peptidase C19 family. As to quaternary structure, heterotetramer with BRE5; contains two molecules of BRE5 and two molecules of UBP3. Forms a complex composed of CDC48, DOA1, deubiquitinase UBP3 and probably BRE5. Within the complex interacts directly with DOA1 and CDC48 in a BRE5-independent manner.

The catalysed reaction is Thiol-dependent hydrolysis of ester, thioester, amide, peptide and isopeptide bonds formed by the C-terminal Gly of ubiquitin (a 76-residue protein attached to proteins as an intracellular targeting signal).. Functionally, has an ATP-independent isopeptidase activity, cleaving at the C-terminus of the ubiquitin moiety in natural or engineered linear fusion proteins, irrespective of their size or the presence of an N-terminal extension to ubiquitin. Plays a role in regulation of silencing by interacting with SIR4. Also, in conjunction with BRE5, cleaves ubiquitin, leading to the subsequent mono-ubiquitination of SEC23. Required for ribophagy, a process which relocalizes ribosomal particles into the vacuole for degradation in response to starvation. The chain is Ubiquitin carboxyl-terminal hydrolase 3 (UBP3) from Saccharomyces cerevisiae (strain ATCC 204508 / S288c) (Baker's yeast).